Here is a 398-residue protein sequence, read N- to C-terminus: O-methyltransferase mpaG (398 aa).

S-adenosyl-L-methionine is bound at residue D264. Residue H306 is the Proton acceptor of the active site. Residues E335 and E362 contribute to the active site.

This sequence belongs to the class I-like SAM-binding methyltransferase superfamily. Cation-independent O-methyltransferase family. COMT subfamily.

Its subcellular location is the cytoplasm. It localises to the cytosol. The catalysed reaction is (4E,8E)-10-(4,6-dihydroxy-7-methyl-3-oxo-1,3-dihydro-2-benzofuran-5-yl)-4,8-dimethyldeca-4,8-dienoate + S-adenosyl-L-methionine = (4E,8E)-10-(4-hydroxy-6-methoxy-7-methyl-3-oxo-1,3-dihydro-2-benzofuran-5-yl)-4,8-dimethyldeca-4,8-dienoate + S-adenosyl-L-homocysteine + H(+). The protein operates within secondary metabolite biosynthesis; terpenoid biosynthesis. Its function is as follows. O-methyltransferase; part of the gene cluster that mediates the biosynthesis of mycophenolic acid (MPA), the first isolated antibiotic natural product in the world obtained from a culture of Penicillium brevicompactum in 1893. MpaC methylates farnesyl-DHMP-3C (FDHMP-3C) to yield MFDHMP-3C. The first step of the pathway is the synthesis of 5-methylorsellinic acid (5MOA) by the cytosolic polyketide synthase mpaC. 5MOA is then converted to the phthalide compound 5,7-dihydroxy-4,6-dimethylphthalide (DHMP) by the endoplasmic reticulum-bound cytochrome P450 monooxygenase mpaDE. MpaDE first catalyzes hydroxylation of 5-MOA to 4,6-dihydroxy-2-(hydroxymethyl)-3-methylbenzoic acid (DHMB). MpaDE then acts as a lactone synthase that catalyzes the ring closure to convert DHMB into DHMP. The next step is the prenylation of DHMP by the Golgi apparatus-associated prenyltransferase mpaA to yield farnesyl-DHMP (FDHMP). The ER-bound oxygenase mpaB then mediates the oxidative cleavage the C19-C20 double bond in FDHMP to yield FDHMP-3C via a mycophenolic aldehyde intermediate. The O-methyltransferase mpaG catalyzes the methylation of FDHMP-3C to yield MFDHMP-3C. After the cytosolic methylation of FDHMP-3C, MFDHMP-3C enters into peroxisomes probably via free diffusion due to its low molecular weight. Upon a peroxisomal CoA ligation reaction, catalyzed by a beta-oxidation component enzyme acyl-CoA ligase ACL891, MFDHMP-3C-CoA would then be restricted to peroxisomes for the following beta-oxidation pathway steps. The peroxisomal beta-oxidation machinery than converts MFDHMP-3C-CoA into MPA_CoA, via a beta-oxidation chain-shortening process. Finally mpaH acts as a peroxisomal acyl-CoA hydrolase with high substrate specificity toward MPA-CoA to release the final product MPA. The sequence is that of O-methyltransferase mpaG from Penicillium roqueforti (strain FM164).